The chain runs to 556 residues: Formate--tetrahydrofolate ligase (556 aa).

65 to 72 (TPAGEGKS) contacts ATP.

This sequence belongs to the formate--tetrahydrofolate ligase family.

The enzyme catalyses (6S)-5,6,7,8-tetrahydrofolate + formate + ATP = (6R)-10-formyltetrahydrofolate + ADP + phosphate. The protein operates within one-carbon metabolism; tetrahydrofolate interconversion. The sequence is that of Formate--tetrahydrofolate ligase from Streptococcus pneumoniae (strain Taiwan19F-14).